Reading from the N-terminus, the 332-residue chain is UDP-3-O-acylglucosamine N-acyltransferase (332 aa).

H235 serves as the catalytic Proton acceptor.

This sequence belongs to the transferase hexapeptide repeat family. LpxD subfamily. Homotrimer.

The catalysed reaction is a UDP-3-O-[(3R)-3-hydroxyacyl]-alpha-D-glucosamine + a (3R)-hydroxyacyl-[ACP] = a UDP-2-N,3-O-bis[(3R)-3-hydroxyacyl]-alpha-D-glucosamine + holo-[ACP] + H(+). Its pathway is bacterial outer membrane biogenesis; LPS lipid A biosynthesis. Catalyzes the N-acylation of UDP-3-O-acylglucosamine using 3-hydroxyacyl-ACP as the acyl donor. Is involved in the biosynthesis of lipid A, a phosphorylated glycolipid that anchors the lipopolysaccharide to the outer membrane of the cell. The protein is UDP-3-O-acylglucosamine N-acyltransferase of Fusobacterium nucleatum subsp. nucleatum (strain ATCC 25586 / DSM 15643 / BCRC 10681 / CIP 101130 / JCM 8532 / KCTC 2640 / LMG 13131 / VPI 4355).